The chain runs to 214 residues: Large ribosomal subunit protein uL1 (214 aa).

The protein belongs to the universal ribosomal protein uL1 family. In terms of assembly, component of the large ribosomal subunit.

The protein resides in the cytoplasm. Functionally, component of the large ribosomal subunit. The ribosome is a large ribonucleoprotein complex responsible for the synthesis of proteins in the cell. The protein is Large ribosomal subunit protein uL1 (RPL10A) of Entamoeba histolytica (strain ATCC 30459 / HM-1:IMSS / ABRM).